Reading from the N-terminus, the 342-residue chain is Galactose mutarotase (342 aa).

The residue at position 2 (alanine 2) is an N-acetylalanine. Serine 14 is modified (phosphoserine). Beta-D-galactose contacts are provided by residues asparagine 81–arginine 82 and histidine 107. A Phosphoserine modification is found at serine 124. The Proton donor role is filled by histidine 176. Beta-D-galactose contacts are provided by residues histidine 176 to tyrosine 178, aspartate 243, glutamine 279, and glutamate 307. The active-site Proton acceptor is glutamate 307.

It belongs to the aldose epimerase family. Monomer.

It is found in the cytoplasm. It carries out the reaction alpha-D-galactose = beta-D-galactose. The enzyme catalyses alpha-D-glucose = beta-D-glucose. It functions in the pathway carbohydrate metabolism; hexose metabolism. It participates in carbohydrate metabolism; galactose metabolism. Mutarotase that catalyzes the interconversion of beta-D-galactose and alpha-D-galactose during galactose metabolism. Beta-D-galactose is metabolized in the liver into glucose 1-phosphate, the primary metabolic fuel, by the action of four enzymes that constitute the Leloir pathway: GALM, GALK1 (galactokinase), GALT (galactose-1-phosphate uridylyltransferase) and GALE (UDP-galactose-4'-epimerase). Involved in the maintenance of the equilibrium between the beta- and alpha-anomers of galactose, therefore ensuring a sufficient supply of the alpha-anomer for GALK1. Also active on D-glucose although shows a preference for galactose over glucose. The polypeptide is Galactose mutarotase (GALM) (Pongo abelii (Sumatran orangutan)).